Here is a 235-residue protein sequence, read N- to C-terminus: Urease accessory protein UreF (235 aa).

The protein belongs to the UreF family. As to quaternary structure, ureD, UreF and UreG form a complex that acts as a GTP-hydrolysis-dependent molecular chaperone, activating the urease apoprotein by helping to assemble the nickel containing metallocenter of UreC. The UreE protein probably delivers the nickel.

It is found in the cytoplasm. Its function is as follows. Required for maturation of urease via the functional incorporation of the urease nickel metallocenter. This Haemophilus influenzae (strain ATCC 51907 / DSM 11121 / KW20 / Rd) protein is Urease accessory protein UreF.